Consider the following 317-residue polypeptide: MGIQETDPLTQLSLPPGFRFYPTDEELMVQYLCRKAAGYDFSLQLIAEIDLYKFDPWVLPNKALFGEKEWYFFSPRDRKYPNGSRPNRVAGSGYWKATGTDKIISTEGQRVGIKKALVFYIGKAPKGTKTNWIMHEYRLIEPSRRNGSTKLDDWVLCRIYKKQSSAQKQVYDNGIANAREFSNNGTSSTTSSSSHFEDVLDSFHQEIDNRNFQFSNPNRISSLRPDLTEQKTGFHGLADTSNFDWASFAGNVEHNNSVPELGMSHVVPNLEYNCGYLKTEEEVESSHGFNNSGELAQKGYGVDSFGYSGQVGGFGFM.

An NAC domain is found at 14–162 (LPPGFRFYPT…DWVLCRIYKK (149 aa)).

Dimer. Interacts with RHA2A, RHA2B or RHG1A, but not with RHA3A or RHA3B. Expressed in stems, flowers, cauline leaves and rosettes.

The protein resides in the nucleus. In terms of biological role, transcription factors that bind specifically to the 5'-CATGTG-3' motif. The chain is NAC domain-containing protein 19 (NAC019) from Arabidopsis thaliana (Mouse-ear cress).